We begin with the raw amino-acid sequence, 865 residues long: Leucine--tRNA ligase (865 aa).

A 'HIGH' region motif is present at residues 48 to 58 (PYPSGQLHVGH). Positions 626–630 (KMSKS) match the 'KMSKS' region motif. Residue Lys629 participates in ATP binding.

This sequence belongs to the class-I aminoacyl-tRNA synthetase family.

It localises to the cytoplasm. The catalysed reaction is tRNA(Leu) + L-leucine + ATP = L-leucyl-tRNA(Leu) + AMP + diphosphate. The polypeptide is Leucine--tRNA ligase (Gluconobacter oxydans (strain 621H) (Gluconobacter suboxydans)).